Reading from the N-terminus, the 445-residue chain is MTVKYSINELLVDHESLSDNFTCPICFDLYYSSSSKKEVFQCRDGHLACKSCWSDSLLNKKECMICRTPVNSMNELSRNRFIENEFLKKKVYCPNSFFFIENVNVDDSSMNEALIRDESNGCKEIITVEALEKHQVECQFRFEKCPFTGCDKILRLKQIAEHKIDCKFSSKYCLHCDKEIPGQLDAHALVCPKVRIQCTQSESCKKSFPREQLRLHIDQDCKFTIVKCKYCCLNNSKNESIDFKRFELADHYEKVNHSFEMDKVINNQQLELVECKNQIYQINNKYEKLLERVIKLEQLSMDASNKLSLLPRFKNSIIFATFSTHKLKRVNEGISTVPLDVGNNKFKLTLYPNGYDESNKGNISAYLYRVSINEPAVKVSFTFVFNNQDSRKNRTYRIQEYTFNGGATSGWGYPKTLKTVDVDSANGWLTDEDKLVIGLRIQVLP.

The segment at 23-67 adopts an RING-type; degenerate zinc-finger fold; the sequence is CPICFDLYYSSSSKKEVFQCRDGHLACKSCWSDSLLNKKECMICR. TRAF-type zinc fingers lie at residues 133 to 186 and 186 to 242; these read KHQV…QLDA and AHAL…ESID. Positions 269-307 form a coiled coil; that stretch reads QLELVECKNQIYQINNKYEKLLERVIKLEQLSMDASNKL. In terms of domain architecture, MATH spans 314 to 441; that stretch reads KNSIIFATFS…EDKLVIGLRI (128 aa).

This sequence belongs to the TNF receptor-associated factor family. A subfamily.

It is found in the cytoplasm. Functionally, probable adapter protein and signal transducer that links members of the tumor necrosis factor receptor family to different signaling pathways by association with the receptor cytoplasmic domain and kinases. In Dictyostelium discoideum (Social amoeba), this protein is TNF receptor-associated factor family protein DDB_G0290971.